The following is a 315-amino-acid chain: GTP cyclohydrolase MptA (315 aa).

It belongs to the GTP cyclohydrolase IV family. As to quaternary structure, homodimer. The cofactor is Fe(2+).

The enzyme catalyses GTP + H2O = 7,8-dihydroneopterin 2',3'-cyclic phosphate + formate + diphosphate + H(+). It participates in cofactor biosynthesis; 5,6,7,8-tetrahydromethanopterin biosynthesis. Converts GTP to 7,8-dihydro-D-neopterin 2',3'-cyclic phosphate, the first intermediate in the biosynthesis of coenzyme methanopterin. This Methanococcus maripaludis (strain C7 / ATCC BAA-1331) protein is GTP cyclohydrolase MptA.